A 333-amino-acid chain; its full sequence is D-2-hydroxyacid dehydrogenase (NAD+) (333 aa).

Residue Y100 participates in 4-methyl-2-oxopentanoate binding. The NAD(+) site is built by H155, I156, D175, V205, N211, T232, R234, and D258. R234 is a catalytic residue. E263 is an active-site residue. Residue H295 coordinates 4-methyl-2-oxopentanoate. Residue H295 is the Proton donor of the active site.

Belongs to the D-isomer specific 2-hydroxyacid dehydrogenase family. Homodimer.

It carries out the reaction a (2R)-2-hydroxycarboxylate + NAD(+) = a 2-oxocarboxylate + NADH + H(+). The enzyme catalyses (2R)-hydroxy-4-methylpentanoate + NAD(+) = 4-methyl-2-oxopentanoate + NADH + H(+). It catalyses the reaction (R)-3-phenyllactate + NAD(+) = 3-phenylpyruvate + NADH + H(+). Completely inhibited In the presence of 0.1 mM Hg(2+). No influence on the activity could be detected with Mg(2+) and Ca(2+) and only very weak effects with Cd(2+), Co(2+) and Mn(2+). Reducing agents and thiol group reagents do not affect catalytic activity. Catalyzes the NADH-dependent reversible reduction of various 2-ketocarboxylic acids to the corresponding D-2-hydroxycarboxylic acids. In vitro can use various substrates, including 4-methyl-2-oxopentanoate (2-oxoisocaproate), 2-oxopentanoate, 2-oxohexanoate and phenylpyruvate. This chain is D-2-hydroxyacid dehydrogenase (NAD+), found in Lacticaseibacillus paracasei (Lactobacillus paracasei).